Reading from the N-terminus, the 833-residue chain is F1 capsule-anchoring protein (833 aa).

A signal peptide spans M1–T25. A disulfide bond links C807 and C829.

Belongs to the fimbrial export usher family.

The protein localises to the cell outer membrane. In terms of biological role, a probable role in capsular biogenesis. It is likely that the caf1A molecule binds F1 antigen subunits during the extracellular secretion process. This chain is F1 capsule-anchoring protein (caf1A), found in Yersinia pestis.